The following is a 412-amino-acid chain: Subtilisin-like protease 6 (412 aa).

The N-terminal stretch at 1 to 20 (MGFITKAIPIVLAALSTVNG) is a signal peptide. The propeptide occupies 21–127 (ARILEAGPHA…VRATTNGTNL (107 aa)). The Inhibitor I9 domain maps to 36 to 120 (KYIVVMKKDV…FIEPDFVVRA (85 aa)). The Peptidase S8 domain maps to 135–412 (SWGLARVSTR…SKLIYNGSGK (278 aa)). Active-site charge relay system residues include Asp167 and His198. Asn252, Asn264, and Asn325 each carry an N-linked (GlcNAc...) asparagine glycan. Ser358 serves as the catalytic Charge relay system. The N-linked (GlcNAc...) asparagine glycan is linked to Asn408.

It belongs to the peptidase S8 family.

The protein localises to the secreted. Functionally, secreted subtilisin-like serine protease with keratinolytic activity that contributes to pathogenicity. The polypeptide is Subtilisin-like protease 6 (SUB6) (Trichophyton verrucosum (strain HKI 0517)).